The sequence spans 465 residues: Endo-1,3-1,4-beta-glycanase EglC (465 aa).

3 Hemolysin-type calcium-binding repeats span residues Tyr33–Thr50, Phe105–Ile122, and Asn123–Phe140. A GH16 domain is found at Leu213–Asp462. Glu349 acts as the Nucleophile in catalysis. Catalysis depends on Glu354, which acts as the Proton donor.

The protein belongs to the glycosyl hydrolase 16 family.

It is found in the secreted. It functions in the pathway glycan metabolism; exopolysaccharide biosynthesis. In terms of biological role, cleaves high molecular weight succinoglycan to yield LMW succinoglycan. Dynamically regulates the molecular weight distribution of succinoglycan by cleaving nascent succinoglycan only during a limited period after its synthesis, perhaps before it undergoes a time-dependent change in its conformation or aggregation state. The protein is Endo-1,3-1,4-beta-glycanase EglC (eglC) of Rhizobium meliloti (strain 1021) (Ensifer meliloti).